Reading from the N-terminus, the 457-residue chain is Bifunctional protein GlmU (457 aa).

Positions 1–232 (MNNLAAVILA…PAEVMGINDR (232 aa)) are pyrophosphorylase. Residues 9 to 12 (LAAG), lysine 23, glutamine 75, and 80 to 81 (GT) each bind UDP-N-acetyl-alpha-D-glucosamine. Residue aspartate 105 participates in Mg(2+) binding. UDP-N-acetyl-alpha-D-glucosamine is bound by residues glycine 142, glutamate 157, asparagine 172, and asparagine 230. A Mg(2+)-binding site is contributed by asparagine 230. The linker stretch occupies residues 233–253 (AQLAEAGQLLRGRINKALMLD). The interval 254–457 (GTTLIDPQTT…NKEGWKLKKK (204 aa)) is N-acetyltransferase. The UDP-N-acetyl-alpha-D-glucosamine site is built by arginine 336 and lysine 354. The active-site Proton acceptor is histidine 366. UDP-N-acetyl-alpha-D-glucosamine-binding residues include tyrosine 369 and asparagine 380. Residues 389 to 390 (NY), serine 408, alanine 426, and arginine 443 contribute to the acetyl-CoA site.

This sequence in the N-terminal section; belongs to the N-acetylglucosamine-1-phosphate uridyltransferase family. The protein in the C-terminal section; belongs to the transferase hexapeptide repeat family. Homotrimer. The cofactor is Mg(2+).

The protein resides in the cytoplasm. The enzyme catalyses alpha-D-glucosamine 1-phosphate + acetyl-CoA = N-acetyl-alpha-D-glucosamine 1-phosphate + CoA + H(+). It carries out the reaction N-acetyl-alpha-D-glucosamine 1-phosphate + UTP + H(+) = UDP-N-acetyl-alpha-D-glucosamine + diphosphate. Its pathway is nucleotide-sugar biosynthesis; UDP-N-acetyl-alpha-D-glucosamine biosynthesis; N-acetyl-alpha-D-glucosamine 1-phosphate from alpha-D-glucosamine 6-phosphate (route II): step 2/2. It functions in the pathway nucleotide-sugar biosynthesis; UDP-N-acetyl-alpha-D-glucosamine biosynthesis; UDP-N-acetyl-alpha-D-glucosamine from N-acetyl-alpha-D-glucosamine 1-phosphate: step 1/1. The protein operates within bacterial outer membrane biogenesis; LPS lipid A biosynthesis. Its function is as follows. Catalyzes the last two sequential reactions in the de novo biosynthetic pathway for UDP-N-acetylglucosamine (UDP-GlcNAc). The C-terminal domain catalyzes the transfer of acetyl group from acetyl coenzyme A to glucosamine-1-phosphate (GlcN-1-P) to produce N-acetylglucosamine-1-phosphate (GlcNAc-1-P), which is converted into UDP-GlcNAc by the transfer of uridine 5-monophosphate (from uridine 5-triphosphate), a reaction catalyzed by the N-terminal domain. The sequence is that of Bifunctional protein GlmU from Geotalea uraniireducens (strain Rf4) (Geobacter uraniireducens).